The following is a 338-amino-acid chain: Adenylosuccinate synthetase (338 aa).

Residues 12 to 18 (GDEGKGK) and 42 to 44 (GHT) contribute to the GTP site. The active-site Proton acceptor is aspartate 13. Residues aspartate 13 and glycine 42 each coordinate Mg(2+). IMP is bound by residues 13–16 (DEGK), 40–43 (NAGH), threonine 127, arginine 141, glutamine 179, threonine 194, and arginine 256. Histidine 43 functions as the Proton donor in the catalytic mechanism. A substrate-binding site is contributed by 252-258 (TVTGRRR). GTP is bound by residues arginine 258, 284 to 286 (CLD), and 324 to 326 (STG).

This sequence belongs to the adenylosuccinate synthetase family. As to quaternary structure, homodimer. Mg(2+) serves as cofactor.

The protein localises to the cytoplasm. It carries out the reaction IMP + L-aspartate + GTP = N(6)-(1,2-dicarboxyethyl)-AMP + GDP + phosphate + 2 H(+). It participates in purine metabolism; AMP biosynthesis via de novo pathway; AMP from IMP: step 1/2. Functionally, plays an important role in the de novo pathway of purine nucleotide biosynthesis. Catalyzes the first committed step in the biosynthesis of AMP from IMP. This Methanococcus maripaludis (strain C7 / ATCC BAA-1331) protein is Adenylosuccinate synthetase.